The following is a 385-amino-acid chain: Homoserine O-succinyltransferase (385 aa).

The AB hydrolase-1 domain maps to 45–355 (NAVLVCHALN…PHGHDAFLLD (311 aa)). The Nucleophile role is filled by S151. Residue R221 participates in substrate binding. Active-site residues include D316 and H349. D350 contributes to the substrate binding site.

Belongs to the AB hydrolase superfamily. MetX family. As to quaternary structure, homodimer.

It is found in the cytoplasm. The enzyme catalyses L-homoserine + succinyl-CoA = O-succinyl-L-homoserine + CoA. It functions in the pathway amino-acid biosynthesis; L-methionine biosynthesis via de novo pathway; O-succinyl-L-homoserine from L-homoserine: step 1/1. In terms of biological role, transfers a succinyl group from succinyl-CoA to L-homoserine, forming succinyl-L-homoserine. This is Homoserine O-succinyltransferase from Janthinobacterium sp. (strain Marseille) (Minibacterium massiliensis).